The primary structure comprises 352 residues: Histidine biosynthesis bifunctional protein HisB (352 aa).

Positions 1–163 (MKKILFIDRD…MVASAIINDA (163 aa)) are histidinol-phosphatase. Residue aspartate 8 is the Nucleophile of the active site. The Mg(2+) site is built by aspartate 8 and aspartate 10. The Proton donor role is filled by aspartate 10. Zn(2+) contacts are provided by cysteine 91, histidine 93, cysteine 99, and cysteine 101. Aspartate 128 provides a ligand contact to Mg(2+). The segment at 164 to 352 (RKASVQRKTK…NYLPSTKGVL (189 aa)) is imidazoleglycerol-phosphate dehydratase.

This sequence in the N-terminal section; belongs to the histidinol-phosphatase family. The protein in the C-terminal section; belongs to the imidazoleglycerol-phosphate dehydratase family. The cofactor is Mg(2+). It depends on Zn(2+) as a cofactor.

It is found in the cytoplasm. The catalysed reaction is D-erythro-1-(imidazol-4-yl)glycerol 3-phosphate = 3-(imidazol-4-yl)-2-oxopropyl phosphate + H2O. It catalyses the reaction L-histidinol phosphate + H2O = L-histidinol + phosphate. It participates in amino-acid biosynthesis; L-histidine biosynthesis; L-histidine from 5-phospho-alpha-D-ribose 1-diphosphate: step 6/9. The protein operates within amino-acid biosynthesis; L-histidine biosynthesis; L-histidine from 5-phospho-alpha-D-ribose 1-diphosphate: step 8/9. This is Histidine biosynthesis bifunctional protein HisB from Legionella pneumophila subsp. pneumophila (strain Philadelphia 1 / ATCC 33152 / DSM 7513).